The primary structure comprises 258 residues: Phosphate import ATP-binding protein PstB 2 (258 aa).

In terms of domain architecture, ABC transporter spans isoleucine 12–isoleucine 253. Glycine 44 to serine 51 lines the ATP pocket.

The protein belongs to the ABC transporter superfamily. Phosphate importer (TC 3.A.1.7) family. The complex is composed of two ATP-binding proteins (PstB), two transmembrane proteins (PstC and PstA) and a solute-binding protein (PstS).

It localises to the cell inner membrane. It catalyses the reaction phosphate(out) + ATP + H2O = ADP + 2 phosphate(in) + H(+). Its function is as follows. Part of the ABC transporter complex PstSACB involved in phosphate import. Responsible for energy coupling to the transport system. The chain is Phosphate import ATP-binding protein PstB 2 from Pectobacterium atrosepticum (strain SCRI 1043 / ATCC BAA-672) (Erwinia carotovora subsp. atroseptica).